A 207-amino-acid polypeptide reads, in one-letter code: Outer-membrane lipoprotein LolB (207 aa).

An N-terminal signal peptide occupies residues M1–A21. C22 carries N-palmitoyl cysteine lipidation. A lipid anchor (S-diacylglycerol cysteine) is attached at C22.

The protein belongs to the LolB family. In terms of assembly, monomer.

It localises to the cell outer membrane. Functionally, plays a critical role in the incorporation of lipoproteins in the outer membrane after they are released by the LolA protein. The sequence is that of Outer-membrane lipoprotein LolB from Salmonella typhi.